We begin with the raw amino-acid sequence, 957 residues long: MTQTLSQLENSGAFIERHIGPDAAQQQEMLNAVGAQSLNALTGQIVPKDIQLATPPQVGAPATEYAALAELKAIASRNKRFTSYIGMGYTAVQLPPVILRNMLENPGWYTAYTPYQPEVSQGRLEALLNFQQVTLDLTGLDMASASLLDEATAAAEAMAMAKRVSKLKNANRFFVASDVHPQTLDVVRTRAETFGFEVIVDDAQKVLDHQDVFGVLLQQVGTTGEIHDYTALISELKSRKIVVSVAADIMALVLLTAPGKQGADIVFGSAQRFGVPMGYGGPHAAFFAAKDEYKRSMPGRIIGVSKDAAGNTALRMAMQTREQHIRREKANSNICTSQVLLANIASLYAVYHGPVGLKRIANRIHRLTDILAAGLQQKGLKLRHAHYFDTLCVEVADKAGVLARAEAAEINLRSDILNAVGITLDETTTRENVMQLFSVLLGDNHGLEIDTLDKDVAHDSRSIQPAMLRDDEILTHPVFNRYHSETEMMRYMHSLERKDLALNQAMIPLGSCTMKLNAAAEMIPITWPEFAELHPFCPPEQAEGYQQMIAQLADWLVKLTGYDAVCMQPNSGAQGEYAGLLAIRHYHESRNEGHRDICLIPASAHGTNPASAHMAGMQVVVVACDKNGNIDLTDLRAKAEQAGDNLSCIMVTYPSTHGVYEETIREVCEVVHQFGGQVYLDGANMNAQVGITSPGFIGADVSHLNLHKTFCIPHGGGGPGMGPIGVKAHLAPFVPGHSVVQIEGMLTRQGAVSAAPFGSASILPISWMYIRMMGAEGLKKASQVAILNANYIASRLQDAFPVLYTGRDGRVAHECILDIRPLKEETSISELDIAKRLIDYGFHAPTMSFPVAGTLMVEPTESESKVELDRFIDAMLAIRAEIDQVKAGVWPLEDNPLVNAPHIQSELVAEWAHPYSHEVAVFPAGVADKYWPTVKRLDDVYGDRNLFCSCVPISEYQ.

Position 708 is an N6-(pyridoxal phosphate)lysine (Lys708).

This sequence belongs to the GcvP family. In terms of assembly, the glycine cleavage system is composed of four proteins: P, T, L and H. Pyridoxal 5'-phosphate is required as a cofactor.

It catalyses the reaction N(6)-[(R)-lipoyl]-L-lysyl-[glycine-cleavage complex H protein] + glycine + H(+) = N(6)-[(R)-S(8)-aminomethyldihydrolipoyl]-L-lysyl-[glycine-cleavage complex H protein] + CO2. Its function is as follows. The glycine cleavage system catalyzes the degradation of glycine. The P protein binds the alpha-amino group of glycine through its pyridoxal phosphate cofactor; CO(2) is released and the remaining methylamine moiety is then transferred to the lipoamide cofactor of the H protein. The sequence is that of Glycine dehydrogenase (decarboxylating) from Shigella boydii serotype 4 (strain Sb227).